The sequence spans 897 residues: Leucine--tRNA ligase (897 aa).

The 'HIGH' region signature appears at 42-52 (PYPSGKLHMGH). A 'KMSKS' region motif is present at residues 645–649 (TMSKS). K648 provides a ligand contact to ATP.

The protein belongs to the class-I aminoacyl-tRNA synthetase family.

The protein localises to the cytoplasm. It carries out the reaction tRNA(Leu) + L-leucine + ATP = L-leucyl-tRNA(Leu) + AMP + diphosphate. The polypeptide is Leucine--tRNA ligase (Paracidovorax citrulli (strain AAC00-1) (Acidovorax citrulli)).